Here is a 351-residue protein sequence, read N- to C-terminus: Phosphate acyltransferase (351 aa).

The protein belongs to the PlsX family. Homodimer. Probably interacts with PlsY.

It is found in the cytoplasm. It carries out the reaction a fatty acyl-[ACP] + phosphate = an acyl phosphate + holo-[ACP]. It participates in lipid metabolism; phospholipid metabolism. In terms of biological role, catalyzes the reversible formation of acyl-phosphate (acyl-PO(4)) from acyl-[acyl-carrier-protein] (acyl-ACP). This enzyme utilizes acyl-ACP as fatty acyl donor, but not acyl-CoA. This chain is Phosphate acyltransferase, found in Verminephrobacter eiseniae (strain EF01-2).